The primary structure comprises 568 residues: Proline--tRNA ligase (568 aa).

The protein belongs to the class-II aminoacyl-tRNA synthetase family. ProS type 1 subfamily. In terms of assembly, homodimer.

It localises to the cytoplasm. The catalysed reaction is tRNA(Pro) + L-proline + ATP = L-prolyl-tRNA(Pro) + AMP + diphosphate. Its function is as follows. Catalyzes the attachment of proline to tRNA(Pro) in a two-step reaction: proline is first activated by ATP to form Pro-AMP and then transferred to the acceptor end of tRNA(Pro). As ProRS can inadvertently accommodate and process non-cognate amino acids such as alanine and cysteine, to avoid such errors it has two additional distinct editing activities against alanine. One activity is designated as 'pretransfer' editing and involves the tRNA(Pro)-independent hydrolysis of activated Ala-AMP. The other activity is designated 'posttransfer' editing and involves deacylation of mischarged Ala-tRNA(Pro). The misacylated Cys-tRNA(Pro) is not edited by ProRS. This is Proline--tRNA ligase from Listeria monocytogenes serotype 4a (strain HCC23).